Consider the following 200-residue polypeptide: Recombination protein RecR (200 aa).

The C4-type zinc finger occupies 57–72 (CERCRNYAQSTLCPVC). In terms of domain architecture, Toprim spans 80–175 (SLVCIVATPG…GVSRIAQGVP (96 aa)).

The protein belongs to the RecR family.

In terms of biological role, may play a role in DNA repair. It seems to be involved in an RecBC-independent recombinational process of DNA repair. It may act with RecF and RecO. The chain is Recombination protein RecR from Alcanivorax borkumensis (strain ATCC 700651 / DSM 11573 / NCIMB 13689 / SK2).